A 174-amino-acid polypeptide reads, in one-letter code: Crossover junction endodeoxyribonuclease RuvC (174 aa).

Residues Asp-16, Glu-76, and Asp-148 contribute to the active site. Mg(2+)-binding residues include Asp-16, Glu-76, and Asp-148.

The protein belongs to the RuvC family. In terms of assembly, homodimer which binds Holliday junction (HJ) DNA. The HJ becomes 2-fold symmetrical on binding to RuvC with unstacked arms; it has a different conformation from HJ DNA in complex with RuvA. In the full resolvosome a probable DNA-RuvA(4)-RuvB(12)-RuvC(2) complex forms which resolves the HJ. Mg(2+) serves as cofactor.

The protein resides in the cytoplasm. The catalysed reaction is Endonucleolytic cleavage at a junction such as a reciprocal single-stranded crossover between two homologous DNA duplexes (Holliday junction).. In terms of biological role, the RuvA-RuvB-RuvC complex processes Holliday junction (HJ) DNA during genetic recombination and DNA repair. Endonuclease that resolves HJ intermediates. Cleaves cruciform DNA by making single-stranded nicks across the HJ at symmetrical positions within the homologous arms, yielding a 5'-phosphate and a 3'-hydroxyl group; requires a central core of homology in the junction. The consensus cleavage sequence is 5'-(A/T)TT(C/G)-3'. Cleavage occurs on the 3'-side of the TT dinucleotide at the point of strand exchange. HJ branch migration catalyzed by RuvA-RuvB allows RuvC to scan DNA until it finds its consensus sequence, where it cleaves and resolves the cruciform DNA. The chain is Crossover junction endodeoxyribonuclease RuvC from Rhodopseudomonas palustris (strain BisA53).